Reading from the N-terminus, the 428-residue chain is 3-phosphoshikimate 1-carboxyvinyltransferase (428 aa).

Lysine 22, serine 23, and arginine 27 together coordinate 3-phosphoshikimate. Residue lysine 22 participates in phosphoenolpyruvate binding. 2 residues coordinate phosphoenolpyruvate: glycine 96 and arginine 124. 3-phosphoshikimate-binding residues include serine 171, serine 172, glutamine 173, serine 198, aspartate 311, and lysine 338. Glutamine 173 contributes to the phosphoenolpyruvate binding site. Aspartate 311 acts as the Proton acceptor in catalysis. Residues arginine 342 and arginine 383 each contribute to the phosphoenolpyruvate site.

It belongs to the EPSP synthase family. Monomer.

The protein localises to the cytoplasm. It carries out the reaction 3-phosphoshikimate + phosphoenolpyruvate = 5-O-(1-carboxyvinyl)-3-phosphoshikimate + phosphate. Its pathway is metabolic intermediate biosynthesis; chorismate biosynthesis. Functionally, catalyzes the transfer of the enolpyruvyl moiety of phosphoenolpyruvate (PEP) to the 5-hydroxyl of shikimate-3-phosphate (S3P) to produce enolpyruvyl shikimate-3-phosphate and inorganic phosphate. This is 3-phosphoshikimate 1-carboxyvinyltransferase from Methanopyrus kandleri (strain AV19 / DSM 6324 / JCM 9639 / NBRC 100938).